The chain runs to 131 residues: SPbeta prophage-derived UPF0715 membrane protein YopD (131 aa).

Transmembrane regions (helical) follow at residues 12–32 (VYTL…YLFV), 38–58 (AIAL…YLVF), 75–95 (LINF…FWFV), and 108–128 (FEYY…DSIF).

Belongs to the UPF0715 family.

It localises to the cell membrane. This chain is SPbeta prophage-derived UPF0715 membrane protein YopD (yopD), found in Bacillus subtilis (strain 168).